A 144-amino-acid chain; its full sequence is MQCGGWMHEEHTADVLVIAYGRTLEEAFENAARGVYEVVTDTSRVEPRRRVDASIEGIDLENLLYRFIENLIAYTDSEGLVFGLFRVCKIECNGESCSIVASAWGEEFDPSRHEHRTIVKAMTYADMEIKEENGCWRVQFVVDI.

Residues Asp-14, Asp-143, and Ile-144 each contribute to the Ca(2+) site.

The protein belongs to the archease family.

Its function is as follows. Activates the tRNA-splicing ligase complex by facilitating the enzymatic turnover of catalytic subunit RtcB. Acts by promoting the guanylylation of RtcB, a key intermediate step in tRNA ligation. Can also alter the NTP specificity of RtcB such that ATP, dGTP or ITP is used efficiently. This is Protein archease from Aeropyrum pernix (strain ATCC 700893 / DSM 11879 / JCM 9820 / NBRC 100138 / K1).